A 177-amino-acid polypeptide reads, in one-letter code: MLDAFSRVVVNSDAKAAYVGGSDLQALKKFIADGNKRLDSVNAIVSNASCIVSDAVSGMICENPGLIAPGGNCYTNRRMAACLRDGEIILRYVSYALLAGDPSVLEDRCLNGLKETYIALGVPTNSSVRAVSIMKAAAVAFITNTASQRKMATADGDCSALASEVASYCDRVAAAIS.

Cys-50 and Cys-61 together coordinate phycourobilin. Asn-72 is modified (N4-methylasparagine). (2R,3E)-phycoerythrobilin contacts are provided by Cys-82 and Cys-158.

Belongs to the phycobiliprotein family. In terms of assembly, heterodimer of an alpha and a beta chain. Contains two covalently linked phycoerythrobilin chromophores and one covalently linked phycourobilin chromophore.

Its subcellular location is the plastid. It is found in the chloroplast thylakoid membrane. Its function is as follows. Light-harvesting photosynthetic bile pigment-protein from the phycobiliprotein complex. The chain is R-phycoerythrin beta chain (cpeB) from Pyropia haitanensis (Red seaweed).